Here is a 387-residue protein sequence, read N- to C-terminus: S-adenosylmethionine synthase (387 aa).

H15 provides a ligand contact to ATP. D17 lines the Mg(2+) pocket. K(+) is bound at residue E43. Residues E56 and Q99 each coordinate L-methionine. A flexible loop region spans residues 99-109; the sequence is QSPDIAQGVNR. Residues 166–168, 232–233, D241, 247–248, A264, and K268 each bind ATP; these read DAK, RF, and RK. D241 is a binding site for L-methionine. Position 272 (K272) interacts with L-methionine.

Belongs to the AdoMet synthase family. In terms of assembly, homotetramer; dimer of dimers. Mg(2+) is required as a cofactor. K(+) serves as cofactor.

The protein resides in the cytoplasm. It carries out the reaction L-methionine + ATP + H2O = S-adenosyl-L-methionine + phosphate + diphosphate. The protein operates within amino-acid biosynthesis; S-adenosyl-L-methionine biosynthesis; S-adenosyl-L-methionine from L-methionine: step 1/1. Catalyzes the formation of S-adenosylmethionine (AdoMet) from methionine and ATP. The overall synthetic reaction is composed of two sequential steps, AdoMet formation and the subsequent tripolyphosphate hydrolysis which occurs prior to release of AdoMet from the enzyme. This Nitrosomonas europaea (strain ATCC 19718 / CIP 103999 / KCTC 2705 / NBRC 14298) protein is S-adenosylmethionine synthase.